The chain runs to 99 residues: NADH-quinone oxidoreductase subunit K (99 aa).

A run of 3 helical transmembrane segments spans residues 2 to 22 (PVEY…LGVL), 28 to 48 (LILM…FLAF), and 60 to 80 (IAFF…AVVI).

Belongs to the complex I subunit 4L family. As to quaternary structure, NDH-1 is composed of 14 different subunits. Subunits NuoA, H, J, K, L, M, N constitute the membrane sector of the complex.

It is found in the cell inner membrane. The catalysed reaction is a quinone + NADH + 5 H(+)(in) = a quinol + NAD(+) + 4 H(+)(out). Functionally, NDH-1 shuttles electrons from NADH, via FMN and iron-sulfur (Fe-S) centers, to quinones in the respiratory chain. The immediate electron acceptor for the enzyme in this species is believed to be ubiquinone. Couples the redox reaction to proton translocation (for every two electrons transferred, four hydrogen ions are translocated across the cytoplasmic membrane), and thus conserves the redox energy in a proton gradient. The sequence is that of NADH-quinone oxidoreductase subunit K from Anaeromyxobacter dehalogenans (strain 2CP-C).